A 359-amino-acid polypeptide reads, in one-letter code: Guanine nucleotide-binding protein subunit alpha-11 (359 aa).

S-palmitoyl cysteine attachment occurs at residues Cys9 and Cys10. One can recognise a G-alpha domain in the interval 38–359; it reads RELKLLLLGT…QLNLKEYNLV (322 aa). The tract at residues 41–54 is G1 motif; it reads KLLLLGTGESGKST. Residues 46-53 and 180-183 each bind GTP; these read GTGESGKS and LRVR. Ser53 contributes to the Mg(2+) binding site. Positions 178–186 are G2 motif; the sequence is DVLRVRVPT. Position 186 (Thr186) interacts with Mg(2+). The interval 201 to 210 is G3 motif; that stretch reads FRMVDVGGQR. The interval 270–277 is G4 motif; sequence ILFLNKKD. Residues 274–277 and Ala331 each bind GTP; that span reads NKKD. The interval 329–334 is G5 motif; that stretch reads TCATDT.

Belongs to the G-alpha family. G(q) subfamily. In terms of assembly, g proteins are composed of 3 units; alpha, beta and gamma. The alpha chain contains the guanine nucleotide binding site. Interacts with RGS22. Interacts with NTSR1.

The protein resides in the cell membrane. Its subcellular location is the cytoplasm. It catalyses the reaction GTP + H2O = GDP + phosphate + H(+). In terms of biological role, guanine nucleotide-binding proteins (G proteins) function as transducers downstream of G protein-coupled receptors (GPCRs) in numerous signaling cascades. The alpha chain contains the guanine nucleotide binding site and alternates between an active, GTP-bound state and an inactive, GDP-bound state. Signaling by an activated GPCR promotes GDP release and GTP binding. The alpha subunit has a low GTPase activity that converts bound GTP to GDP, thereby terminating the signal. Both GDP release and GTP hydrolysis are modulated by numerous regulatory proteins. Signaling is mediated via phospholipase C-beta-dependent inositol lipid hydrolysis for signal propagation: activates phospholipase C-beta: following GPCR activation, GNA11 activates PLC-beta (PLCB1, PLCB2, PLCB3 or PLCB4), leading to production of diacylglycerol (DAG) and inositol 1,4,5-trisphosphate (IP3). Transduces FFAR4 signaling in response to long-chain fatty acids (LCFAs). Together with GNAQ, required for heart development. In the respiratory epithelium, transmits OXGR1-dependent signals that lead to downstream intracellular Ca(2+) release and mucocilliary clearance of airborne pathogens. The sequence is that of Guanine nucleotide-binding protein subunit alpha-11 (GNA11) from Sus scrofa (Pig).